Here is a 370-residue protein sequence, read N- to C-terminus: Peptide chain release factor 2 (370 aa).

An N5-methylglutamine modification is found at Gln-249.

Belongs to the prokaryotic/mitochondrial release factor family. Methylated by PrmC. Methylation increases the termination efficiency of RF2.

The protein localises to the cytoplasm. Peptide chain release factor 2 directs the termination of translation in response to the peptide chain termination codons UGA and UAA. The chain is Peptide chain release factor 2 from Kosmotoga olearia (strain ATCC BAA-1733 / DSM 21960 / TBF 19.5.1).